We begin with the raw amino-acid sequence, 482 residues long: G patch domain-containing protein 2-like (482 aa).

Ser-31, Ser-86, and Ser-88 each carry phosphoserine. Position 91 is a phosphothreonine (Thr-91). 2 disordered regions span residues Ser-195 to Asp-222 and Lys-408 to Cys-482. A compositionally biased stretch (basic and acidic residues) spans Gly-198–Asp-215. A compositionally biased stretch (low complexity) spans Val-414–Pro-427. Positions Glu-468 to Cys-482 are enriched in polar residues.

This Mus musculus (Mouse) protein is G patch domain-containing protein 2-like (Gpatch2l).